The chain runs to 198 residues: Peptidyl-tRNA hydrolase (198 aa).

Tyr-15 provides a ligand contact to tRNA. His-20 acts as the Proton acceptor in catalysis. Residues Phe-66, Asn-68, and Asn-114 each contribute to the tRNA site.

This sequence belongs to the PTH family. In terms of assembly, monomer.

The protein localises to the cytoplasm. It carries out the reaction an N-acyl-L-alpha-aminoacyl-tRNA + H2O = an N-acyl-L-amino acid + a tRNA + H(+). Its function is as follows. Hydrolyzes ribosome-free peptidyl-tRNAs (with 1 or more amino acids incorporated), which drop off the ribosome during protein synthesis, or as a result of ribosome stalling. Functionally, catalyzes the release of premature peptidyl moieties from peptidyl-tRNA molecules trapped in stalled 50S ribosomal subunits, and thus maintains levels of free tRNAs and 50S ribosomes. The polypeptide is Peptidyl-tRNA hydrolase (Cupriavidus taiwanensis (strain DSM 17343 / BCRC 17206 / CCUG 44338 / CIP 107171 / LMG 19424 / R1) (Ralstonia taiwanensis (strain LMG 19424))).